The following is a 71-amino-acid chain: MKQGIHPEMKLITVKCACGAEHTMYSTVDNFRLDVCSECHPFYRGELGSQILDTEGRVQKFKNKYKDFLEN.

4 residues coordinate Zn(2+): C16, C18, C36, and C39.

Belongs to the bacterial ribosomal protein bL31 family. Type A subfamily. Part of the 50S ribosomal subunit. It depends on Zn(2+) as a cofactor.

In terms of biological role, binds the 23S rRNA. This is Large ribosomal subunit protein bL31 from Petrotoga mobilis (strain DSM 10674 / SJ95).